The chain runs to 249 residues: Protein ZPS1 (249 aa).

The N-terminal stretch at 1–20 (MKFSSGKSIIFATIASLALS) is a signal peptide. 4 N-linked (GlcNAc...) asparagine glycosylation sites follow: N28, N57, N98, and N217.

It belongs to the ZPS1 family.

The sequence is that of Protein ZPS1 (ZPS1) from Saccharomyces cerevisiae (strain ATCC 204508 / S288c) (Baker's yeast).